The sequence spans 367 residues: Cystinosin (367 aa).

An N-terminal signal peptide occupies residues 1 to 22 (MRRNWLLILTLFLLMFIEKYES). Residues 23-125 (TVSLTAPPTV…LVIHSRIVSI (103 aa)) are Lumenal-facing. 6 N-linked (GlcNAc...) asparagine glycosylation sites follow: N36, N51, N66, N84, N104, and N107. The region spanning 123–189 (VSIINQVIGW…LLWVPYIQEE (67 aa)) is the PQ-loop 1 domain. Residues 126 to 150 (INQVIGWIYFMAWSVSFYPQVIQNW) form a helical membrane-spanning segment. Over 151 to 159 (RRKSVIGLS) the chain is Cytoplasmic. Residues 160 to 179 (FDFLALNLTGFVAYSVFNIG) traverse the membrane as a helical segment. N166 provides a ligand contact to L-cystine. Over 180 to 202 (LLWVPYIQEEFLLKYPNGVNPVD) the chain is Lumenal. A helical membrane pass occupies residues 203–225 (SNDAFFSLHAVALTLIVILQCCL). D205 contacts H(+). Residues 226-234 (YERGNQRVS) are Cytoplasmic-facing. The helical transmembrane segment at 235 to 257 (WPSIGFLVLAWLFVLVTMIVAAV) threads the bilayer. At 258 to 263 (GITTWL) the chain is on the lumenal side. The region spanning 263–328 (LQFLFCFSYI…QSYNNDQWTL (66 aa)) is the PQ-loop 2 domain. Residues 264–289 (QFLFCFSYIKLIITLIKYFPQAYMNF) form a helical membrane-spanning segment. Residues K273, K280, and Y281 each coordinate L-cystine. The Cytoplasmic segment spans residues 290 to 298 (YYKSTKGWS). Residues 299-308 (IGGVLLDFTG) form a helical membrane-spanning segment. D305 is an L-cystine binding site. D305 is a binding site for H(+). At 309–331 (GSFSLLQMFLQSYNNDQWTLIFG) the chain is on the lumenal side. Residues 332-354 (DPTKFGLGVFTIFFDVVFFIQHF) form a helical membrane-spanning segment. D346 contributes to the H(+) binding site. The Cytoplasmic portion of the chain corresponds to 355 to 367 (YLYRKKPGYDQLN). A Lysosomal targeting motif motif is present at residues 362–366 (GYDQL).

It belongs to the cystinosin family. In terms of assembly, interacts with components of the V-ATPase complex. Interacts with components of the Ragulator complex. Interacts with RRAGA/RagA and RRAGC/RagC. Interacts with AP-3 complex subunit mu (AP3M1 or AP3M2).

It is found in the lysosome membrane. The protein localises to the melanosome membrane. The enzyme catalyses L-cystine(out) + H(+)(out) = L-cystine(in) + H(+)(in). With respect to regulation, switches between a lumen- and a cytosol-open conformation: pH induces conformational changes and shifts the equilibrium to facilitate the transition between the lumen- and cytosol-open conformation, thereby promoting cystine transport. Protonation of specific aspartate residues (Asp-205, Asp-305 and Asp-346) favors the cytosol-open conformation. In terms of biological role, cystine/H(+) symporter that mediates export of cystine, the oxidized dimer of cysteine, from lysosomes. Plays an important role in melanin synthesis by catalyzing cystine export from melanosomes, possibly by inhibiting pheomelanin synthesis. In addition to cystine export, also acts as a positive regulator of mTORC1 signaling in kidney proximal tubular cells, via interactions with components of the v-ATPase and Ragulator complexes. Also involved in small GTPase-regulated vesicle trafficking and lysosomal localization of LAMP2A, independently of cystine transporter activity. This is Cystinosin from Mus musculus (Mouse).